The following is a 191-amino-acid chain: Lipoprotein signal peptidase (191 aa).

3 helical membrane passes run 26 to 46, 84 to 104, and 110 to 130; these read VWFP…LKAW, AVPL…YLLW, and FLTV…IDGL. Active-site residues include Asp-137 and Asp-163. The helical transmembrane segment at 156-176 threads the bilayer; sequence FPIFNIADMCVVGGTILLLVA.

This sequence belongs to the peptidase A8 family.

It is found in the cell membrane. It catalyses the reaction Release of signal peptides from bacterial membrane prolipoproteins. Hydrolyzes -Xaa-Yaa-Zaa-|-(S,diacylglyceryl)Cys-, in which Xaa is hydrophobic (preferably Leu), and Yaa (Ala or Ser) and Zaa (Gly or Ala) have small, neutral side chains.. It functions in the pathway protein modification; lipoprotein biosynthesis (signal peptide cleavage). In terms of biological role, this protein specifically catalyzes the removal of signal peptides from prolipoproteins. This is Lipoprotein signal peptidase from Deinococcus radiodurans (strain ATCC 13939 / DSM 20539 / JCM 16871 / CCUG 27074 / LMG 4051 / NBRC 15346 / NCIMB 9279 / VKM B-1422 / R1).